A 773-amino-acid polypeptide reads, in one-letter code: MKFEESMELPVIVVDSGVLLPGASLKIPIRSKLNTRTIEQHLTRGGSNYVVIAYKLSTDKIYNVATIAYIEKLFGWTFNSTTNYSLDVIGLHRANIDKLSFPKCRVSKLEDSSERAEFNHSTIENVISGAKILAQNSESLKFSQEIHNSIDDHDYGKLADLCVSQIKNLEFSQFLDFLGTKNVEKRLEMCEKWMQMQRETKALQLKMAVPGNSEIPKKINKQRIPNSKNQVEQLEEKLSAIEFSEEVSDRVFSELHRLKNMNPQQSEYTVLMNWLELVSNLPWNTSTVDDIEINKARKILEDSHESMDDVKQRVLEHLAVCKINNSVKGMILCFTGPPGIGKTSIAKAIAESMGRKFQRVSLGGIRDESDIRGHRRTYVAAMPGRIIEALKHCKSNNPVFLLDEVDKLYSGNQGSPSAALLELLDPEQNSTFHDHYLNIPFDVSKIMFIATANDVERLEPALKDRLEIIEMSGYSMKEKVKICENHLVNRQLSKHCISPDYVNLDRHAIMAMIEEFTMEAGVRQLERNVGAVCRHVALRLAEALNSDPSADVLPDMDLPIQIGEPDIHKILKAKHMKRVKIVEKMRPLPPGVCFGLSVTTNGGRVMPIEASKCKGTGKIVTTGHLGKVLEESILVAKGWLGANAEKLGLKTLEENDIHVHLPAGAVNKDGPSAGTGLACALVSLAMGVPLRSDAAVTGEISLTGHVLAIGGVKEKVLAAQREGLRRVVLPKSNEEEYLKIDEDIRNEMDVVLADTVEDVIEAMMEKEPVLAKL.

Residues 9-198 (LPVIVVDSGV…MCEKWMQMQR (190 aa)) enclose the Lon N-terminal domain. Position 336-343 (336-343 (GPPGIGKT)) interacts with ATP. The Lon proteolytic domain occupies 587-766 (PLPPGVCFGL…EDVIEAMMEK (180 aa)). Catalysis depends on residues serine 672 and lysine 715. A Microbody targeting signal motif is present at residues 771–773 (AKL).

It belongs to the peptidase S16 family.

Its subcellular location is the peroxisome matrix. The catalysed reaction is Hydrolysis of proteins in presence of ATP.. Its function is as follows. ATP-dependent serine protease that mediates the selective degradation of misfolded and unassembled polypeptides in the peroxisomal matrix. Necessary for type 2 peroxisome targeting signal (PTS2)-containing protein processing and facilitates peroxisome matrix protein import. This is Lon protease homolog 2, peroxisomal from Caenorhabditis briggsae.